Reading from the N-terminus, the 612-residue chain is Cytoplasmic dynein 1 intermediate chain 2 (612 aa).

Composition is skewed to basic and acidic residues over residues 1–13 (MSDK…ELER) and 20–43 (QIRE…KKEA). 2 disordered regions span residues 1-117 (MSDK…MAKI) and 129-188 (TYTK…EEKQ). At serine 2 the chain carries N-acetylserine. Serine 51 is subject to Diphosphoserine. 2 positions are modified to phosphoserine: serine 51 and serine 84. Over residues 82 to 91 (PSSKSVSTPS) the composition is skewed to low complexity. The residue at position 89 (threonine 89) is a Phosphothreonine. Residues serine 91, serine 95, and serine 98 each carry the phosphoserine modification. A compositionally biased stretch (basic and acidic residues) spans 164–188 (EKTLKKDEESDSKAPPHELTEEEKQ). 7 WD repeats span residues 251–300 (SKHR…TTPE), 304–344 (HCQS…RTPV), 353–394 (AHTH…HPQD), 403–443 (SKAV…AGIS), 448–493 (GHQG…PLYS), 496–536 (DNSD…EVPT), and 542–581 (EGNP…AVPR).

This sequence belongs to the dynein intermediate chain family. Homodimer. The cytoplasmic dynein 1 complex consists of two catalytic heavy chains (HCs) and a number of non-catalytic subunits presented by intermediate chains (ICs), light intermediate chains (LICs) and light chains (LCs); the composition seems to vary in respect to the IC, LIC and LC composition. The heavy chain homodimer serves as a scaffold for the probable homodimeric assembly of the respective non-catalytic subunits. The ICs and LICs bind directly to the HC dimer and the LCs assemble on the IC dimer. Interacts with DYNLT3. Interacts with DYNLT1. Interacts (dephosphorylated at Ser-84) with DCTN1. Interacts with BICD2. Interacts with SPEF2. Interacts with CFAP61. The phosphorylation status of Ser-84 appears to be involved in dynactin-dependent target binding. In terms of processing, pyrophosphorylation by 5-diphosphoinositol pentakisphosphate (5-IP7) promotes interaction with DCTN1. Serine pyrophosphorylation is achieved by Mg(2+)-dependent, but enzyme independent transfer of a beta-phosphate from a inositol pyrophosphate to a pre-phosphorylated serine residue.

It localises to the cytoplasm. The protein resides in the cytoskeleton. Acts as one of several non-catalytic accessory components of the cytoplasmic dynein 1 complex that are thought to be involved in linking dynein to cargos and to adapter proteins that regulate dynein function. Cytoplasmic dynein 1 acts as a motor for the intracellular retrograde motility of vesicles and organelles along microtubules. The intermediate chains mediate the binding of dynein to dynactin via its 150 kDa component (p150-glued) DCTN1. Involved in membrane-transport, such as Golgi apparatus, late endosomes and lysosomes. This is Cytoplasmic dynein 1 intermediate chain 2 (DYNC1I2) from Bos taurus (Bovine).